Consider the following 254-residue polypeptide: Nickel import ATP-binding protein NikD (254 aa).

Residues 2-241 (PQQIELRNIA…PKHTVTRSLV (240 aa)) form the ABC transporter domain. Residue 36–43 (GGSGSGKS) coordinates ATP.

Belongs to the ABC transporter superfamily. Nickel importer (TC 3.A.1.5.3) family. In terms of assembly, the complex is composed of two ATP-binding proteins (NikD and NikE), two transmembrane proteins (NikB and NikC) and a solute-binding protein (NikA).

Its subcellular location is the cell inner membrane. The catalysed reaction is Ni(2+)(out) + ATP + H2O = Ni(2+)(in) + ADP + phosphate + H(+). Part of the ABC transporter complex NikABCDE involved in nickel import. Responsible for energy coupling to the transport system. The chain is Nickel import ATP-binding protein NikD from Shigella boydii serotype 4 (strain Sb227).